A 216-amino-acid polypeptide reads, in one-letter code: Thymidylate kinase (216 aa).

An ATP-binding site is contributed by 10–17; the sequence is GIDGCGKT.

Belongs to the thymidylate kinase family.

The catalysed reaction is dTMP + ATP = dTDP + ADP. Its function is as follows. Phosphorylation of dTMP to form dTDP in both de novo and salvage pathways of dTTP synthesis. The sequence is that of Thymidylate kinase from Prochlorococcus marinus (strain MIT 9303).